Consider the following 460-residue polypeptide: Metal cation symporter ZIP8 (460 aa).

The signal sequence occupies residues 1–22 (MAPGRAVAGLLLLAAAGLGGVA). Residues 23–132 (EGPGLAFSED…PSHSEVWGYG (110 aa)) are Extracellular-facing. N-linked (GlcNAc...) asparagine glycosylation is found at asparagine 40 and asparagine 88. A helical membrane pass occupies residues 133-153 (FLSVTIINLASLLGLILTPLI). Over 154-160 (KKSYFPK) the chain is Cytoplasmic. Residues 161–181 (ILTFFVGLAIGTLFSNAIFQL) form a helical membrane-spanning segment. Topologically, residues 182 to 191 (IPEAFGFDPK) are extracellular. The helical transmembrane segment at 192-212 (VDSYVEKAVAVFGGFYLLFFF) threads the bilayer. Residues 213-365 (ERMLKMLLKT…LNAGMSTRQA (153 aa)) are Cytoplasmic-facing. The XEXPHE-motif motif lies at 343–348 (EEFPHE). The helical transmembrane segment at 366–386 (LLFNFLSACSCYVGLAFGILV) threads the bilayer. The Extracellular segment spans residues 387 to 388 (GN). The chain crosses the membrane as a helical span at residues 389 to 409 (NFAPNIIFALAGGMFLYISLA). The Cytoplasmic portion of the chain corresponds to 410 to 429 (DMFPEMNDMLREKVTGRKTD). A helical transmembrane segment spans residues 430–450 (FTFFMIQNAGMLTGFTAILLI). The Extracellular portion of the chain corresponds to 451-460 (TLYAGEIELE).

Belongs to the ZIP transporter (TC 2.A.5) family. In terms of assembly, homodimer. In terms of processing, N-glycosylated. N-glycosylation is not required for proper iron and zinc transport. Ubiquitously expressed. Expressed in thymus, placenta, lung, liver, pancreas, salivary gland and, to a lower extent, in spleen, testis, ovary, small intestine, colon, leukocyte, heart. Highest expression is observed in pancreas. Expressed by macrophages (at protein level). Expressed by microvascular capillary endothelial cells that constitute the blood-brain barrier (at protein level).

The protein resides in the cell membrane. It localises to the lysosome membrane. The protein localises to the apical cell membrane. It is found in the basolateral cell membrane. It carries out the reaction Zn(2+)(out) + 2 hydrogencarbonate(out) = Zn(2+)(in) + 2 hydrogencarbonate(in). The enzyme catalyses selenite(out) + Zn(2+)(out) + hydrogencarbonate(out) = selenite(in) + Zn(2+)(in) + hydrogencarbonate(in). The catalysed reaction is Mn(2+)(out) + 2 hydrogencarbonate(out) = Mn(2+)(in) + 2 hydrogencarbonate(in). It catalyses the reaction Fe(2+)(out) + 2 hydrogencarbonate(out) = Fe(2+)(in) + 2 hydrogencarbonate(in). It carries out the reaction Cd(2+)(out) + 2 hydrogencarbonate(out) = Cd(2+)(in) + 2 hydrogencarbonate(in). The enzyme catalyses Co(2+)(out) + 2 hydrogencarbonate(out) = Co(2+)(in) + 2 hydrogencarbonate(in). Electroneutral divalent metal cation:bicarbonate symporter of the plasma membrane mediating the cellular uptake of zinc and manganese, two divalent metal cations important for development, tissue homeostasis and immunity. Transports an electroneutral complex composed of a divalent metal cation and two bicarbonate anions or alternatively a bicarbonate and a selenite anion. Thereby, it also contributes to the cellular uptake of selenium, an essential trace metal and micronutrient. Also imports cadmium a non-essential metal which is cytotoxic and carcinogenic. May also transport iron and cobalt through membranes. Through zinc import, indirectly regulates the metal-dependent transcription factor MTF1 and the expression of some metalloproteases involved in cartilage catabolism and also probably heart development. Also indirectly regulates the expression of proteins involved in cell morphology and cytoskeleton organization. Indirectly controls innate immune function and inflammatory response by regulating zinc cellular uptake which in turn modulates the expression of genes specific of these processes. Protects, for instance, cells from injury and death at the onset of inflammation. By regulating zinc influx into monocytes also directly modulates their adhesion to endothelial cells and arteries. Reclaims manganese from the bile at the apical membrane of hepatocytes, thereby regulating the activity of the manganese-dependent enzymes through the systemic levels of the nutrient. Also participates in manganese reabsorption in the proximal tubule of the kidney. By mediating the extracellular uptake of manganese by cells of the blood-brain barrier, may also play a role in the transport of the micronutrient to the brain. With manganese cellular uptake also participates in mitochondrial proper function. Finally, also probably functions intracellularly, translocating zinc from lysosome to cytosol to indirectly enhance the expression of specific genes during TCR-mediated T cell activation. The sequence is that of Metal cation symporter ZIP8 from Homo sapiens (Human).